We begin with the raw amino-acid sequence, 277 residues long: 3-methyl-2-oxobutanoate hydroxymethyltransferase (277 aa).

Residues D49 and D88 each contribute to the Mg(2+) site. Residues 49 to 50, D88, and K118 contribute to the 3-methyl-2-oxobutanoate site; that span reads DS. E120 lines the Mg(2+) pocket. The Proton acceptor role is filled by E186.

It belongs to the PanB family. Homodecamer; pentamer of dimers. Requires Mg(2+) as cofactor.

The protein resides in the cytoplasm. It catalyses the reaction 3-methyl-2-oxobutanoate + (6R)-5,10-methylene-5,6,7,8-tetrahydrofolate + H2O = 2-dehydropantoate + (6S)-5,6,7,8-tetrahydrofolate. Its pathway is cofactor biosynthesis; (R)-pantothenate biosynthesis; (R)-pantoate from 3-methyl-2-oxobutanoate: step 1/2. Functionally, catalyzes the reversible reaction in which hydroxymethyl group from 5,10-methylenetetrahydrofolate is transferred onto alpha-ketoisovalerate to form ketopantoate. The polypeptide is 3-methyl-2-oxobutanoate hydroxymethyltransferase (Cereibacter sphaeroides (strain ATCC 17025 / ATH 2.4.3) (Rhodobacter sphaeroides)).